Here is a 207-residue protein sequence, read N- to C-terminus: Dephospho-CoA kinase (207 aa).

The region spanning 5 to 207 (IVGLTGGIAS…AALQTHRIEN (203 aa)) is the DPCK domain. 13-18 (ASGKSA) lines the ATP pocket.

This sequence belongs to the CoaE family.

Its subcellular location is the cytoplasm. It carries out the reaction 3'-dephospho-CoA + ATP = ADP + CoA + H(+). It participates in cofactor biosynthesis; coenzyme A biosynthesis; CoA from (R)-pantothenate: step 5/5. Functionally, catalyzes the phosphorylation of the 3'-hydroxyl group of dephosphocoenzyme A to form coenzyme A. In Xanthomonas campestris pv. campestris (strain ATCC 33913 / DSM 3586 / NCPPB 528 / LMG 568 / P 25), this protein is Dephospho-CoA kinase.